The chain runs to 118 residues: Ribonuclease P protein component (118 aa).

This sequence belongs to the RnpA family. As to quaternary structure, consists of a catalytic RNA component (M1 or rnpB) and a protein subunit.

It catalyses the reaction Endonucleolytic cleavage of RNA, removing 5'-extranucleotides from tRNA precursor.. In terms of biological role, RNaseP catalyzes the removal of the 5'-leader sequence from pre-tRNA to produce the mature 5'-terminus. It can also cleave other RNA substrates such as 4.5S RNA. The protein component plays an auxiliary but essential role in vivo by binding to the 5'-leader sequence and broadening the substrate specificity of the ribozyme. The polypeptide is Ribonuclease P protein component (Vibrio cholerae serotype O1 (strain ATCC 39541 / Classical Ogawa 395 / O395)).